The primary structure comprises 444 residues: UPF0053 protein YhdP (444 aa).

The CNNM transmembrane domain maps to 1–201 (MDIVNLILVA…YKSGEINQSE (201 aa)). Helical transmembrane passes span 7-27 (ILVA…FAII), 61-81 (ACQL…ESTI), and 101-121 (VISF…VGEL). CBS domains are found at residues 220–282 (MIPR…SVDS) and 284–344 (ISQF…IRDE).

This sequence belongs to the UPF0053 family.

It is found in the cell membrane. This Bacillus subtilis (strain 168) protein is UPF0053 protein YhdP (yhdP).